Consider the following 296-residue polypeptide: uncharacterized protein (296 aa).

Positions 129–170 form a coiled coil; the sequence is VKELKDLIRTVADEHMKMKREHEAAMKELTLLINNQKQQQQQ. The interval 165–187 is disordered; that stretch reads KQQQQQPVPMPRNSTATRPKNLA.

This is an uncharacterized protein from Ostreid herpesvirus 1 (isolate France) (OsHV-1).